A 420-amino-acid polypeptide reads, in one-letter code: Hemojuvelin (420 aa).

A signal peptide spans 1-32 (MGQSPSPRSPHGSPPTLSTLTLLLLLCGQAHS). At Tyr-43 the chain carries Phosphotyrosine. The N-linked (GlcNAc...) asparagine glycan is linked to Asn-111. Residues 113–135 (SRQGPTAPPPARGPALPGAGPAP) form a disordered region. Residues 125–134 (GPALPGAGPA) show a composition bias toward low complexity. 2 disulfide bridges follow: Cys-141-Cys-223 and Cys-160-Cys-310. Asn-206 and Asn-365 each carry an N-linked (GlcNAc...) asparagine glycan. Asp-393 carries GPI-anchor amidated aspartate lipidation. Positions 394 to 420 (AGPPLSPAICLVPLLSALFVLWLCFSK) are cleaved as a propeptide — removed in mature form.

The protein belongs to the repulsive guidance molecule (RGM) family. As to quaternary structure, interacts with BMP2 and BMP4. Interacts with BMP6. Interacts with BMPR1B. Interacts with TMPRSS6. Autocatalytically cleaved at low pH; the two chains remain linked via two disulfide bonds. Also proteolytically processed by TMPRSS6, several fragments being released in the extracellular space; regulates HJV activity in BMP signaling and thefore iron homeostasis. In terms of tissue distribution, muscle cell lineage.

The protein localises to the cell membrane. Acts as a bone morphogenetic protein (BMP) coreceptor. Through enhancement of BMP signaling regulates hepcidin (HAMP) expression and regulates iron homeostasis. The protein is Hemojuvelin of Mus musculus (Mouse).